The chain runs to 718 residues: DNA topoisomerase 1 (718 aa).

Residues 9-151 (HEVIICEKPK…KFSTLTREEI (143 aa)) enclose the Toprim domain. Mg(2+) is bound by residues Glu15 and Asp113. Residues 162-571 (DYGQVDSGAA…EAITEVRSIL (410 aa)) enclose the Topo IA-type catalytic domain. The interaction with DNA stretch occupies residues 202-207 (SAGRVQ). Tyr320 functions as the O-(5'-phospho-DNA)-tyrosine intermediate in the catalytic mechanism. Basic and acidic residues predominate over residues 361–371 (HEGKKEDDAHP). The interval 361 to 380 (HEGKKEDDAHPAIHPTGLLP) is disordered. C4-type zinc fingers lie at residues 598 to 626 (CPACGGKLVIKYSPRNRSTFVGCSSYPDC) and 680 to 706 (CPECGSDLIKRSGRYGEFVGCKGFPKC).

This sequence belongs to the type IA topoisomerase family. Monomer. The cofactor is Mg(2+).

The catalysed reaction is ATP-independent breakage of single-stranded DNA, followed by passage and rejoining.. Its function is as follows. Releases the supercoiling and torsional tension of DNA, which is introduced during the DNA replication and transcription, by transiently cleaving and rejoining one strand of the DNA duplex. Introduces a single-strand break via transesterification at a target site in duplex DNA. The scissile phosphodiester is attacked by the catalytic tyrosine of the enzyme, resulting in the formation of a DNA-(5'-phosphotyrosyl)-enzyme intermediate and the expulsion of a 3'-OH DNA strand. The free DNA strand then undergoes passage around the unbroken strand, thus removing DNA supercoils. Finally, in the religation step, the DNA 3'-OH attacks the covalent intermediate to expel the active-site tyrosine and restore the DNA phosphodiester backbone. This is DNA topoisomerase 1 from Methanothermobacter thermautotrophicus (strain ATCC 29096 / DSM 1053 / JCM 10044 / NBRC 100330 / Delta H) (Methanobacterium thermoautotrophicum).